A 304-amino-acid polypeptide reads, in one-letter code: Coenzyme PQQ synthesis protein B (304 aa).

It belongs to the PqqB family.

Its pathway is cofactor biosynthesis; pyrroloquinoline quinone biosynthesis. Functionally, may be involved in the transport of PQQ or its precursor to the periplasm. This Gluconobacter oxydans (strain 621H) (Gluconobacter suboxydans) protein is Coenzyme PQQ synthesis protein B.